A 118-amino-acid polypeptide reads, in one-letter code: uncharacterized protein (118 aa).

2 helical membrane-spanning segments follow: residues 7–27 and 34–58; these read VIVKCEFFCIFTFIFGCFIIE and VFVACCTIIKMGRCNMCIFITAIIF.

It localises to the membrane. This is an uncharacterized protein from Saccharomyces cerevisiae (strain ATCC 204508 / S288c) (Baker's yeast).